Here is a 424-residue protein sequence, read N- to C-terminus: STAM-binding protein (424 aa).

Residues 1–127 (MSDHADVSLP…YEQYKERKKK (127 aa)) form an interaction with CHMP3 region. Serine 2 and serine 48 each carry phosphoserine. The tract at residues 227–231 (PAKPP) is interaction with STAM. Serine 243 bears the Phosphoserine mark. An MPN domain is found at 257 to 388 (IVVPRNLCSE…LTDYGLQEIS (132 aa)). 7 residues coordinate Zn(2+): histidine 335, histidine 337, aspartate 348, histidine 350, cysteine 390, histidine 396, and histidine 398. A JAMM motif motif is present at residues 335–348 (HTHPTQTAFLSSVD).

Belongs to the peptidase M67C family. As to quaternary structure, interacts with STAM. Interacts with SMAD6 and SMAD7. Interacts with CHMP3; the interaction appears to relieve the autoinhibition of CHMP3. Interacts with SMURF2 and RNF11; this interaction promotes ubiquitination. The cofactor is Zn(2+). In terms of processing, phosphorylated after BMP type I receptor activation. Post-translationally, ubiquitinated by SMURF2 in the presence of RNF11.

It is found in the nucleus. Its subcellular location is the membrane. It localises to the cytoplasm. The protein resides in the early endosome. With respect to regulation, inhibited by N-ethylmaleimide. In terms of biological role, zinc metalloprotease that specifically cleaves 'Lys-63'-linked polyubiquitin chains. Does not cleave 'Lys-48'-linked polyubiquitin chains. Plays a role in signal transduction for cell growth and MYC induction mediated by IL-2 and GM-CSF. Potentiates BMP (bone morphogenetic protein) signaling by antagonizing the inhibitory action of SMAD6 and SMAD7. Has a key role in regulation of cell surface receptor-mediated endocytosis and ubiquitin-dependent sorting of receptors to lysosomes. Endosomal localization of STAMBP is required for efficient EGFR degradation but not for its internalization. Involved in the negative regulation of PI3K-AKT-mTOR and RAS-MAP signaling pathways. The polypeptide is STAM-binding protein (Stambp) (Rattus norvegicus (Rat)).